The sequence spans 421 residues: Testin (421 aa).

Residues 92–199 enclose the PET domain; it reads MILTNPVAAK…GDVKLPREMN (108 aa). The segment at 133-164 is disordered; it reads EKQPVAGSEGAQYRKKQLAKQLPAHDQDPSKC. Over residues 155 to 164 the composition is skewed to basic and acidic residues; it reads PAHDQDPSKC. LIM zinc-binding domains follow at residues 234 to 297, 299 to 359, and 362 to 421; these read YSCY…CDSE, PRCA…NHAV, and QGCH…KMMS.

This sequence belongs to the prickle / espinas / testin family. In terms of assembly, interacts via LIM domain 1 with ZYX. Interacts (via LIM domain 3) with ENAH and VASP. Interacts with ALKBH4, talin, actin, alpha-actinin, GRIP1 and PXN. Interacts (via LIM domain 2) with ACTL7A (via N-terminus). Heterodimer with ACTL7A; the heterodimer interacts with ENAH to form a heterotrimer.

The protein resides in the cytoplasm. It localises to the cell junction. Its subcellular location is the focal adhesion. Scaffold protein that may play a role in cell adhesion, cell spreading and in the reorganization of the actin cytoskeleton. Plays a role in the regulation of cell proliferation. May act as a tumor suppressor. This chain is Testin (TES), found in Sus scrofa (Pig).